The sequence spans 606 residues: NADH-ubiquinone oxidoreductase chain 5 (606 aa).

15 consecutive transmembrane segments (helical) span residues 3–23, 38–58, 87–107, 124–144, 180–200, 216–236, 244–264, 276–296, 304–323, 328–350, 369–389, 404–424, 460–480, 483–503, and 586–606; these read VINL…LPIT, ITKM…LLFL, FFSL…MEFS, LLLF…LQLF, IGDM…NSWE, LLGL…HPWL, TPVS…FTLI, IQTS…ICAL, IIAL…IGIN, AFTH…GSII, MPIT…MPFL, MSYI…MTAS, LILG…PHTT, MTMP…GFTV, and LMKL…LITL.

The protein belongs to the complex I subunit 5 family. Core subunit of respiratory chain NADH dehydrogenase (Complex I) which is composed of 45 different subunits.

Its subcellular location is the mitochondrion inner membrane. It catalyses the reaction a ubiquinone + NADH + 5 H(+)(in) = a ubiquinol + NAD(+) + 4 H(+)(out). Its function is as follows. Core subunit of the mitochondrial membrane respiratory chain NADH dehydrogenase (Complex I) which catalyzes electron transfer from NADH through the respiratory chain, using ubiquinone as an electron acceptor. Essential for the catalytic activity and assembly of complex I. This is NADH-ubiquinone oxidoreductase chain 5 (MT-ND5) from Elephas maximus (Indian elephant).